The primary structure comprises 353 residues: Photosystem II D2 protein (353 aa).

An N-acetylthreonine modification is found at T2. Position 2 is a phosphothreonine (T2). The chain crosses the membrane as a helical span at residues 41–61 (CAYFALGGWFTGTTFVTSWYT). H118 lines the chlorophyll a pocket. Residues 125–141 (GFMLRQFELARSVQLRP) traverse the membrane as a helical segment. 2 residues coordinate pheophytin a: Q130 and N143. Residues 153-166 (VFVSVFLIYPLGQS) traverse the membrane as a helical segment. Position 198 (H198) interacts with chlorophyll a. A helical membrane pass occupies residues 208 to 228 (AALLCAIHGATVENTLFEDGD). Positions 215 and 262 each coordinate a plastoquinone. Residue H215 coordinates Fe cation. Residue H269 coordinates Fe cation. The chain crosses the membrane as a helical span at residues 279–295 (GLWMSALGVVGLALNLR).

This sequence belongs to the reaction center PufL/M/PsbA/D family. PSII is composed of 1 copy each of membrane proteins PsbA, PsbB, PsbC, PsbD, PsbE, PsbF, PsbH, PsbI, PsbJ, PsbK, PsbL, PsbM, PsbT, PsbX, PsbY, PsbZ, Psb30/Ycf12, at least 3 peripheral proteins of the oxygen-evolving complex and a large number of cofactors. It forms dimeric complexes. The D1/D2 heterodimer binds P680, chlorophylls that are the primary electron donor of PSII, and subsequent electron acceptors. It shares a non-heme iron and each subunit binds pheophytin, quinone, additional chlorophylls, carotenoids and lipids. There is also a Cl(-1) ion associated with D1 and D2, which is required for oxygen evolution. The PSII complex binds additional chlorophylls, carotenoids and specific lipids. is required as a cofactor.

The protein localises to the plastid. Its subcellular location is the chloroplast thylakoid membrane. It carries out the reaction 2 a plastoquinone + 4 hnu + 2 H2O = 2 a plastoquinol + O2. In terms of biological role, photosystem II (PSII) is a light-driven water:plastoquinone oxidoreductase that uses light energy to abstract electrons from H(2)O, generating O(2) and a proton gradient subsequently used for ATP formation. It consists of a core antenna complex that captures photons, and an electron transfer chain that converts photonic excitation into a charge separation. The D1/D2 (PsbA/PsbD) reaction center heterodimer binds P680, the primary electron donor of PSII as well as several subsequent electron acceptors. D2 is needed for assembly of a stable PSII complex. In Ranunculus macranthus (Large buttercup), this protein is Photosystem II D2 protein.